A 412-amino-acid chain; its full sequence is CHRNA7-FAM7A fusion protein (412 aa).

A run of 5 helical transmembrane segments spans residues 144-164 (GLNL…VFLL), 172-192 (ISLG…VAEI), 205-225 (QYFA…VIVL), 240-254 (WTRV…WFLR), and 380-400 (LCLM…LMSA).

The protein belongs to the ligand-gated ion channel (TC 1.A.9) family. In terms of tissue distribution, expressed in hippocampus.

Its subcellular location is the membrane. The chain is CHRNA7-FAM7A fusion protein (CHRFAM7A) from Homo sapiens (Human).